Reading from the N-terminus, the 553-residue chain is Phospholipase B (553 aa).

The signal sequence occupies residues 1-35 (MIRFGNPSSSDKRRQRCRSWYWGGLLLLWAVAETR). 3 N-linked (GlcNAc...) asparagine glycosylation sites follow: Asn-313, Asn-416, and Asn-531.

Belongs to the phospholipase B-like family. As to expression, expressed by the venom gland.

Its subcellular location is the secreted. In terms of biological role, may cause hemolysis or may be involved in protein folding and translation. This is Phospholipase B from Crotalus adamanteus (Eastern diamondback rattlesnake).